Reading from the N-terminus, the 305-residue chain is 2-oxoacid:ferredoxin oxidoreductase subunit beta (305 aa).

[4Fe-4S] cluster is bound by residues Cys12, Cys15, and Cys46. Thiamine diphosphate-binding positions include 44–47 (IGCS) and His65. Mg(2+) is bound at residue Asp90. 91 to 92 (GD) serves as a coordination point for thiamine diphosphate. The Mg(2+) site is built by Asn118 and Val120. Position 122 to 123 (122 to 123 (GL)) interacts with thiamine diphosphate. Residue Cys197 participates in [4Fe-4S] cluster binding.

As to quaternary structure, heterodimer composed of an alpha and a beta subunit. [4Fe-4S] cluster is required as a cofactor. Requires thiamine diphosphate as cofactor. The cofactor is Mg(2+).

It is found in the cytoplasm. The catalysed reaction is a 2-oxocarboxylate + 2 oxidized [2Fe-2S]-[ferredoxin] + CoA = an acyl-CoA + 2 reduced [2Fe-2S]-[ferredoxin] + CO2 + H(+). In terms of biological role, catalyzes the coenzyme A-dependent oxidative decarboxylation of different 2-oxoacids such as 2-oxoglutarate, pyruvate and 2-oxobutyrate to form their CoA derivatives. The sequence is that of 2-oxoacid:ferredoxin oxidoreductase subunit beta from Sulfolobus sp.